We begin with the raw amino-acid sequence, 99 residues long: UPF0125 protein PM0166 (99 aa).

This sequence belongs to the UPF0125 (RnfH) family.

The polypeptide is UPF0125 protein PM0166 (Pasteurella multocida (strain Pm70)).